We begin with the raw amino-acid sequence, 564 residues long: Potassium-transporting ATPase potassium-binding subunit (564 aa).

10 helical membrane-spanning segments follow: residues 4–24 (HEIL…PFLG), 67–87 (TLAL…ILML), 135–155 (VGLT…LVAL), 179–199 (LYVL…QGVP), 258–278 (FEVA…GHYV), 286–306 (AILG…LWAE), 376–396 (IFGG…IAVF), 420–440 (LLVF…AIAA), 487–507 (LMIG…ILAI), and 528–548 (GPLF…LTFL).

This sequence belongs to the KdpA family. As to quaternary structure, the system is composed of three essential subunits: KdpA, KdpB and KdpC.

The protein localises to the cell inner membrane. Part of the high-affinity ATP-driven potassium transport (or Kdp) system, which catalyzes the hydrolysis of ATP coupled with the electrogenic transport of potassium into the cytoplasm. This subunit binds the periplasmic potassium ions and delivers the ions to the membrane domain of KdpB through an intramembrane tunnel. The sequence is that of Potassium-transporting ATPase potassium-binding subunit from Pseudomonas aeruginosa (strain ATCC 15692 / DSM 22644 / CIP 104116 / JCM 14847 / LMG 12228 / 1C / PRS 101 / PAO1).